We begin with the raw amino-acid sequence, 338 residues long: Fructose-1,6-bisphosphatase class 1 (338 aa).

Positions 94, 116, 118, and 119 each coordinate Mg(2+). Residues 119–122, asparagine 210, and lysine 276 each bind substrate; that span reads DGSS. Glutamate 282 contacts Mg(2+).

It belongs to the FBPase class 1 family. As to quaternary structure, homotetramer. Requires Mg(2+) as cofactor.

It is found in the cytoplasm. It catalyses the reaction beta-D-fructose 1,6-bisphosphate + H2O = beta-D-fructose 6-phosphate + phosphate. Its pathway is carbohydrate biosynthesis; gluconeogenesis. The polypeptide is Fructose-1,6-bisphosphatase class 1 (Burkholderia mallei (strain NCTC 10247)).